Reading from the N-terminus, the 307-residue chain is D-alanine--D-alanine ligase (307 aa).

Residues K108–E301 enclose the ATP-grasp domain. L135–T185 lines the ATP pocket. The Mg(2+) site is built by D252, E268, and N270.

This sequence belongs to the D-alanine--D-alanine ligase family. Mg(2+) is required as a cofactor. Mn(2+) serves as cofactor.

The protein resides in the cytoplasm. It catalyses the reaction 2 D-alanine + ATP = D-alanyl-D-alanine + ADP + phosphate + H(+). The protein operates within cell wall biogenesis; peptidoglycan biosynthesis. Its function is as follows. Cell wall formation. The chain is D-alanine--D-alanine ligase from Cereibacter sphaeroides (strain ATCC 17025 / ATH 2.4.3) (Rhodobacter sphaeroides).